We begin with the raw amino-acid sequence, 135 residues long: Alpha-ketoglutarate dehydrogenase subunit 4, mitochondrial (135 aa).

This sequence belongs to the alpha-ketoglutarate dehydrogenase component 4 family. As to quaternary structure, component of the 2-oxoglutarate dehydrogenase complex (OGDC), also called alpha-ketoglutarate dehydrogenase (KGDH) complex. The copmplex is composed of the catalytic subunits OGDH (2-oxoglutarate dehydrogenase; also called E1 subunit), DLST (dihydrolipoamide succinyltransferase; also called E2 subunit) and DLD (dihydrolipoamide dehydrogenase; also called E3 subunit), and the assembly factor KGD4. Within OGDC, interacts (via N-terminus) with E3 subunit and (via C-terminus) with the complex core formed by E1 and E2 subunits.

It localises to the mitochondrion. Functionally, molecular adapter that is necessary to a form a stable 2-oxoglutarate dehydrogenase enzyme complex (OGDC). Required for incorporation of the E3 subunit into the E1-E2 core of mitochondrial OGDC, and acting as a stability factor for the fully assembled complex. This is Alpha-ketoglutarate dehydrogenase subunit 4, mitochondrial (KGD4) from Chaetomium thermophilum (strain DSM 1495 / CBS 144.50 / IMI 039719) (Thermochaetoides thermophila).